The sequence spans 130 residues: Small ribosomal subunit protein uS8 (130 aa).

It belongs to the universal ribosomal protein uS8 family. As to quaternary structure, part of the 30S ribosomal subunit. Contacts proteins S5 and S12.

Its function is as follows. One of the primary rRNA binding proteins, it binds directly to 16S rRNA central domain where it helps coordinate assembly of the platform of the 30S subunit. The sequence is that of Small ribosomal subunit protein uS8 from Onion yellows phytoplasma (strain OY-M).